Consider the following 407-residue polypeptide: Heparan-sulfate 6-O-sulfotransferase 1-B (407 aa).

At 8–14 the chain is on the cytoplasmic side; sequence MVERTSK. The chain crosses the membrane as a helical; Signal-anchor for type II membrane protein span at residues 15–35; that stretch reads FLLIVVGSVFFMLILYQYVAP. Topologically, residues 36-407 are lumenal; that stretch reads GVINFGSPHG…DYMNHIINGW (372 aa). Position 92–100 (92–100) interacts with 3'-phosphoadenylyl sulfate; sequence HIQKTGGTT. Residues 122–123, R139, W144, and H149 each bind substrate; that span reads KK. Residue H149 is the Proton acceptor of the active site. Residues R183 and S191 each contribute to the 3'-phosphoadenylyl sulfate site. The substrate site is built by H195 and W202. N-linked (GlcNAc...) asparagine glycosylation occurs at N262. 315–317 provides a ligand contact to 3'-phosphoadenylyl sulfate; sequence MQY. N318 carries an N-linked (GlcNAc...) asparagine glycan. 321-322 contacts 3'-phosphoadenylyl sulfate; sequence RA. N-linked (GlcNAc...) asparagine glycosylation occurs at N329.

It belongs to the sulfotransferase 6 family. During early somitogenesis, first expressed in floor plate and somites. During mid-somitogenesis, expressed strongly in somites and more weakly in eye and hindbrain. During late somitogenesis, expressed in eye, hindbrain and posterior somites. At 24 hours post-fertilization (hpf), expressed in lens, forebrain, hindbrain, otic vesicle, anterior spinal cord neurons and posterior somites. At 36 hpf, expressed in the retinal ciliary marginal zone, brain, pancreas and weakly in pectoral fin. At 48 hpf, expressed in the retinal ciliary marginal zone, retinal ganglion cells, rhombomeres, otic vesicle and weakly in pectoral fin.

Its subcellular location is the membrane. It carries out the reaction alpha-D-glucosaminyl-[heparan sulfate](n) + 3'-phosphoadenylyl sulfate = 6-sulfo-alpha-D-glucosaminyl-[heparan sulfate](n) + adenosine 3',5'-bisphosphate + H(+). Functionally, 6-O-sulfation enzyme which catalyzes the transfer of sulfate from 3'-phosphoadenosine 5'-phosphosulfate (PAPS) to position 6 of the N-sulfoglucosamine residue (GlcNS) of heparan sulfate. The sequence is that of Heparan-sulfate 6-O-sulfotransferase 1-B from Danio rerio (Zebrafish).